Consider the following 358-residue polypeptide: Peptide chain release factor 1 (358 aa).

Gln-233 carries the post-translational modification N5-methylglutamine.

The protein belongs to the prokaryotic/mitochondrial release factor family. Post-translationally, methylated by PrmC. Methylation increases the termination efficiency of RF1.

It is found in the cytoplasm. Peptide chain release factor 1 directs the termination of translation in response to the peptide chain termination codons UAG and UAA. The polypeptide is Peptide chain release factor 1 (Clostridium botulinum (strain 657 / Type Ba4)).